Reading from the N-terminus, the 464-residue chain is Glutamate--tRNA ligase 1 (464 aa).

The 'HIGH' region signature appears at 8 to 18 (PSPTGHLHVGG). A 'KMSKS' region motif is present at residues 231-235 (PLSKR). Position 234 (K234) interacts with ATP.

Belongs to the class-I aminoacyl-tRNA synthetase family. Glutamate--tRNA ligase type 1 subfamily. In terms of assembly, monomer.

Its subcellular location is the cytoplasm. It catalyses the reaction tRNA(Glu) + L-glutamate + ATP = L-glutamyl-tRNA(Glu) + AMP + diphosphate. Catalyzes the attachment of glutamate to tRNA(Glu) in a two-step reaction: glutamate is first activated by ATP to form Glu-AMP and then transferred to the acceptor end of tRNA(Glu). In Thermotoga petrophila (strain ATCC BAA-488 / DSM 13995 / JCM 10881 / RKU-1), this protein is Glutamate--tRNA ligase 1.